A 766-amino-acid polypeptide reads, in one-letter code: Disabled homolog 2 (766 aa).

Positions 1–16 (MSNEVETSTTNGQPDQ) are enriched in polar residues. The segment at 1 to 36 (MSNEVETSTTNGQPDQQAAPKAPSKKEKKKGSEKTD) is disordered. Position 2 is an N-acetylserine (serine 2). At serine 2 the chain carries Phosphoserine. Positions 45-196 (GDGVKYKAKL…KAEENGSEAL (152 aa)) constitute a PID domain. Tyrosine 170 carries the post-translational modification Phosphotyrosine. At serine 193 the chain carries Phosphoserine. The tract at residues 230–447 (ESKDILLVDL…KPGRGRRTAK (218 aa)) is required for localization to clathrin-coated pits. Disordered regions lie at residues 284–482 (LNFF…NFLD), 596–630 (PPPT…LKDI), 659–683 (RQPP…FSSY), and 699–766 (DFDA…NPFA). 2 consecutive short sequence motifs (DPF) follow at residues 293–295 (DPF) and 298–300 (DPF). Composition is skewed to polar residues over residues 303–334 (PDQS…QSKG) and 367–381 (PSSQ…QNGV). Phosphoserine is present on serine 323. A phosphoserine; in mitosis mark is found at serine 326 and serine 328. Serine 401 is subject to Phosphoserine. Polar residues predominate over residues 467–480 (MSPTGQPAVPQSNF). Over residues 600–612 (MSTQSSPQPMMSS) the composition is skewed to low complexity. A sufficient for interaction with GRB2 region spans residues 600 to 730 (MSTQSSPQPM…VLLGTKSADN (131 aa)). The required for interaction with CSK stretch occupies residues 617–625 (PPQPPPRNG). Residues 647 to 766 (KEVKEMFKDF…HRSPFGNPFA (120 aa)) form a required for interaction with MYO6 region. Residues 661 to 669 (PPLVPSRKG) form a required for interaction with GRB2 and CSK region. Phosphothreonine is present on threonine 671. The span at 673–683 (PSGTSSAFSSY) shows a compositional bias: polar residues. A sufficient for interaction with SH3KBP1 SH3 domain region spans residues 707–723 (NKINEPPKPAPRQGVLL). Residues serine 727 and serine 759 each carry the phosphoserine modification. The span at 727–753 (SADNSLENPFSKGFSSSNPSVVSQPAS) shows a compositional bias: polar residues.

In terms of assembly, interacts (via NPXY motif) with DAB2 (via PID domain). Can interact (via PID domain) with LDLR, APP, APLP1 and APLP2, and weakly with INPP5D (via NPXY motifs); the interaction is impaired by tyrosine phosphorylation of the respective NPXY motifs. Can weakly interact (via PID domain) with LRP1 (via NPXY motif); the interaction is enhanced by tyrosine phosphorylation of the NPXY motif. Interacts with LRP2 (via NPXY motif); the interaction is not affected by tyrosine phosphorylation of the NPXY motif. Interacts with clathrin; in vitro can assemble clathrin triskelia into polyhedral coats. Interacts with AP2A2, ITGB1, ITGB3, ITGB5, PIAS2, DAB2IP, NOSTRIN, FCHO1, DVL3 and EPS15L1. Interacts with SH3KBP1 (via SH3 domains). Interacts with GRB2; competes with SOS1 for binding to GRB2 and the interaction is enhanced by EGF and NT-3 stimulation. Isoform p96 interacts with EPS15 and ITSN1; isoform p67 does not interact with EPS15 and only weakly interacts with ITSN1. Interacts with MAP3K7; the interaction is induced by TGF-beta stimulation and may mediate TGF-beta stimulated JNK activation. Interacts with AXIN1 and PPP1CA; the interactions are mutually exclusive. Interacts with the globular tail of MYO6. Interacts (via DPF motifs) with FCHO2; the interaction is direct and required for DAB2-mediated LDLR endocytosis. Interacts with LRP6; the interaction involves LRP6 phosphorylation by CK2 and sequesters LRP6 towards clathrin-mediated endocytosis. Associates with the TGF-beta receptor complex. Interacts with SMAD2 and SMAD3; the interactions are enhanced upon TGF-beta stimulation. Interacts with GRB2; the interaction is enhanced by EGF and NT-3 stimulation. Interacts with SRC; the interaction is enhanced by EGF stimulation. Phosphorylated on serine residues in response to mitogenic growth-factor stimulation. Phosphorylation during mitosis is leading to membrane displacement. As to expression, isoform p96 and isoform p67 are expressed in adult kidney and fibroblasts with isoform p96 being the predominant form. Isoform p67 is the predominant isoform expressed in embryonic visceral endoderm.

It is found in the cytoplasmic vesicle. The protein resides in the clathrin-coated vesicle membrane. The protein localises to the membrane. It localises to the clathrin-coated pit. Its subcellular location is the cytoplasm. It is found in the nucleus. Functionally, adapter protein that functions as a clathrin-associated sorting protein (CLASP) required for clathrin-mediated endocytosis of selected cargo proteins. Can bind and assemble clathrin, and binds simultaneously to phosphatidylinositol 4,5-bisphosphate (PtdIns(4,5)P2) and cargos containing non-phosphorylated NPXY internalization motifs, such as the LDL receptor, to recruit them to clathrin-coated pits. Can function in clathrin-mediated endocytosis independently of the AP-2 complex. Involved in endocytosis of integrin beta-1; this function seems to redundant with the AP-2 complex and seems to require DAB2 binding to endocytosis accessory EH domain-containing proteins such as EPS15, EPS15L1 and ITSN1. Involved in endocytosis of cystic fibrosis transmembrane conductance regulator/CFTR. Isoform p96 is involved in endocytosis of megalin/LRP2 lipoprotein receptor during embryonal development. Required for recycling of the TGF-beta receptor. Isoform p67 is not involved in LDL receptor endocytosis. Involved in CFTR trafficking to the late endosome. Involved in several receptor-mediated signaling pathways. Involved in TGF-beta receptor signaling and facilitates phosphorylation of the signal transducer SMAD2. Mediates TFG-beta-stimulated JNK activation. May inhibit the canoniocal Wnt/beta-catenin signaling pathway by stabilizing the beta-catenin destruction complex through a competing association with axin preventing its dephosphorylation through protein phosphatase 1 (PP1). Sequesters LRP6 towards clathrin-mediated endocytosis, leading to inhibition of Wnt/beta-catenin signaling. May activate non-canonical Wnt signaling. In cell surface growth factor/Ras signaling pathways proposed to inhibit ERK activation by interrupting the binding of GRB2 to SOS1 and to inhibit SRC by preventing its activating phosphorylation at 'Tyr-419'. Proposed to be involved in modulation of androgen receptor (AR) signaling mediated by SRC activation; seems to compete with AR for interaction with SRC. Plays a role in the CSF-1 signal transduction pathway. Plays a role in cellular differentiation. Involved in cell positioning and formation of visceral endoderm (VE) during embryogenesis and proposed to be required in the VE to respond to Nodal signaling coming from the epiblast. Required for the epithelial to mesenchymal transition, a process necessary for proper embryonic development. May be involved in myeloid cell differentiation and can induce macrophage adhesion and spreading. Isoform p67 may be involved in transcriptional regulation. May act as a tumor suppressor. The sequence is that of Disabled homolog 2 (Dab2) from Mus musculus (Mouse).